The sequence spans 580 residues: Viral transcription factor IE2 (580 aa).

Positions 1 to 11 are enriched in basic and acidic residues; the sequence is MESSAKRKMDP. 2 disordered regions span residues 1–30 and 99–161; these read MESSAKRKMDPDNPDEGPSSKVPRPETPVT and DSSS…VIIK. Positions 99–133 are enriched in polar residues; the sequence is DSSSTGPTLTTHSCSVSSAPLNKPTPTSVAVTNTP. Glycyl lysine isopeptide (Lys-Gly) (interchain with G-Cter in SUMO) cross-links involve residues Lys-175 and Lys-180. The short motif at 199–202 is the SUMO-interacting motif 1/SIM1 element; that stretch reads CIVI. Positions 200–208 are non-covalent SUMO1 binding region (SIM); sequence IVISDSEEE. Ser-203 and Ser-205 each carry phosphoserine. The tract at residues 206-336 is disordered; the sequence is EEEQGEEVET…SKRISELDNE (131 aa). Low complexity-rich tracts occupy residues 216–236, 259–271, and 302–317; these read RGATASSPSTGSGTPRVTSPT, SSSSSSSCSSASD, and AASSSLLSCGHQSSGG. Residues 410–413 carry the SUMO-interacting motif 1/SIM2 motif; that stretch reads IQII. The short motif at 501-504 is the SUMO-interacting motif 1/SIM3 element; that stretch reads VDLL.

The protein belongs to the HHV-5 IE2 protein family. Interacts with host SUMO-modified form of TATA-binding protein (TBP)-associated factor 12/TAF12 in a SIM-dependent manner; this interaction increases the transactivation activity of IE2. Interacts with host CHAF1A. Interacts with several components of the host transcriptional machinery including TBP, TF2B and CREB1. Interacts with host DNA replication licensing factor MCM3. Interacts with host PLSCR1; this interaction inhibits IE2 transactivating activity. Phosphorylated by host CK2 at Ser-203 and Ser-205; leading to enhanced SUMOylation. In terms of processing, SUMOylated; SUMOylation is enhanced when IE2 is phosphorylated by host CK2. The sumoylation is necessary for efficient replication of the virus and thus for the function of this viral transcription factor.

It localises to the host nucleus. Its function is as follows. Stimulates viral early and late gene expression and thus play a crucial role in the regulation of productive infection. Selectively drives host RNA Pol II transcription initiation at a subset of viral early-late and late promoters without substantially affecting Pol II transcription of expressed host genes. Mechanistically, forms a repressive complex at the major immediate-early promoter region involving direct association with host nucleosomes and TBP. Concerning activation, stimulates transcription by binding nearby, but not within, core promoter regions. In addition, activates quiescent cells to reenter the cell cycle and up-regulates several E2F-responsive genes, which are responsible for pushing the cell into S phase. In S-phase, inhibits cellular DNA synthesis and blocks further cell cycle progression. The chain is Viral transcription factor IE2 (UL122) from Homo sapiens (Human).